The chain runs to 153 residues: 3-hydroxyacyl-[acyl-carrier-protein] dehydratase FabZ (153 aa).

His54 is an active-site residue.

This sequence belongs to the thioester dehydratase family. FabZ subfamily.

It is found in the cytoplasm. It carries out the reaction a (3R)-hydroxyacyl-[ACP] = a (2E)-enoyl-[ACP] + H2O. Its function is as follows. Involved in unsaturated fatty acids biosynthesis. Catalyzes the dehydration of short chain beta-hydroxyacyl-ACPs and long chain saturated and unsaturated beta-hydroxyacyl-ACPs. The polypeptide is 3-hydroxyacyl-[acyl-carrier-protein] dehydratase FabZ (Chlamydia trachomatis serovar L2 (strain ATCC VR-902B / DSM 19102 / 434/Bu)).